Consider the following 132-residue polypeptide: uncharacterized protein (132 aa).

Helical transmembrane passes span 12–32 and 37–57; these read VIGF…KKLY and LTLA…IPVL.

It is found in the cell membrane. This is an uncharacterized protein from Methanocaldococcus jannaschii (strain ATCC 43067 / DSM 2661 / JAL-1 / JCM 10045 / NBRC 100440) (Methanococcus jannaschii).